The sequence spans 966 residues: Mitogen-activated protein kinase kinase kinase 13 (966 aa).

2 disordered regions span residues methionine 1–lysine 22 and serine 93–glycine 112. Residues alanine 96–glycine 112 are compositionally biased toward polar residues. Positions isoleucine 168–isoleucine 409 constitute a Protein kinase domain. Residues leucine 174–valine 182 and lysine 195 each bind ATP. Residue aspartate 279 is the Proton acceptor of the active site. Leucine-zipper stretches follow at residues valine 433–leucine 454 and leucine 486–valine 507. Disordered stretches follow at residues lysine 534–histidine 652, aspartate 744–arginine 834, serine 846–leucine 873, and aspartate 887–leucine 906. The segment covering serine 567 to lysine 581 has biased composition (low complexity). Over residues serine 582 to asparagine 594 the composition is skewed to basic residues. Composition is skewed to polar residues over residues glutamine 609–proline 629 and phenylalanine 781–leucine 795. The segment covering aspartate 814 to valine 827 has biased composition (acidic residues). The interval serine 815–glutamate 828 is acidic. The segment covering serine 846–valine 855 has biased composition (polar residues).

The protein belongs to the protein kinase superfamily. STE Ser/Thr protein kinase family. MAP kinase kinase kinase subfamily. Homodimer; forms dimers through the leucine-zipper motif. Interacts with the C-terminus of MAPK8IP1 through the kinase catalytic domain. Binds PRDX3. Associates with the IKK complex through the kinase domain. Mg(2+) serves as cofactor. Post-translationally, autophosphorylated on serine and threonine residues.

The protein resides in the cytoplasm. The protein localises to the membrane. It catalyses the reaction L-seryl-[protein] + ATP = O-phospho-L-seryl-[protein] + ADP + H(+). The enzyme catalyses L-threonyl-[protein] + ATP = O-phospho-L-threonyl-[protein] + ADP + H(+). With respect to regulation, activated by autophosphorylation and homodimerization. Functionally, activates the JUN N-terminal pathway through activation of the MAP kinase kinase MAP2K7. Acts synergistically with PRDX3 to regulate the activation of NF-kappa-B in the cytosol. This activation is kinase-dependent and involves activating the IKK complex, the IKBKB-containing complex that phosphorylates inhibitors of NF-kappa-B. In Pongo abelii (Sumatran orangutan), this protein is Mitogen-activated protein kinase kinase kinase 13.